Reading from the N-terminus, the 385-residue chain is Glucans biosynthesis protein C (385 aa).

10 helical membrane-spanning segments follow: residues 17 to 37 (AWLMLLGIPFHISLIYSSHTW), 60 to 80 (MQVFFVISGYFSYMLFLRYPL), 91 to 111 (VGIPMLTAIPLLTLPQFIMLQ), 137 to 157 (ISHLWFLLVLVVMTTLCVWIF), 173 to 193 (KFSMVKLSVIFLCLGIGYAVI), 212 to 232 (FIVMQTLFYLPFFILGALAFI), 239 to 259 (LFTTPSRGCTLAAALAFVAYL), 274 to 294 (TESVITMVLGLWMVNVVFSFG), 311 to 331 (ASLFIYLVHHPLTLFFGAYIT), and 338 to 358 (WLGFLCGLIFVVGIAIILYEI).

Belongs to the acyltransferase 3 family. OpgC subfamily.

It localises to the cell membrane. It participates in glycan metabolism; osmoregulated periplasmic glucan (OPG) biosynthesis. Necessary for the succinyl substitution of periplasmic glucans. Could catalyze the transfer of succinyl residues from the cytoplasmic side of the membrane to the nascent glucan backbones on the periplasmic side of the membrane. This is Glucans biosynthesis protein C from Escherichia coli (strain SMS-3-5 / SECEC).